Here is a 994-residue protein sequence, read N- to C-terminus: Cation-chloride cotransporter 2 (994 aa).

Residues 1–28 form a disordered region; sequence MERGGFGGAGRHDEEAPAMRPAPQQRYR. Residues 1 to 139 are Cytoplasmic-facing; sequence MERGGFGGAG…GHPKETETKL (139 aa). A helical transmembrane segment spans residues 140–160; it reads DTMMGVFVPCLQNILGIIYYI. Topologically, residues 161-174 are extracellular; it reads RFTWIVGMGGVWQS. The helical transmembrane segment at 175 to 195 threads the bilayer; sequence LVLVAFCGSCTFLTTISLSAI. The Cytoplasmic portion of the chain corresponds to 196 to 221; the sequence is ATNGAMKGGGPYYLIGRALGPEVGVS. The chain crosses the membrane as a helical span at residues 222–242; that stretch reads IGLCFFLGNAVAGAMYVLGAV. Residues 243-287 lie on the Extracellular side of the membrane; sequence ETFLDAVPSAEFFQESVTVVTNTFVNGTAAGNATTISTPNLHDLQ. N268 and N274 each carry an N-linked (GlcNAc...) asparagine glycan. A helical transmembrane segment spans residues 288–308; the sequence is VYGIIVTILLCFIVFGGVKII. Residues 309 to 311 are Cytoplasmic-facing; sequence NKV. A helical transmembrane segment spans residues 312–332; sequence APAFLIPVLFSILCIYIGVFI. Over 333 to 372 the chain is Extracellular; it reads APRPNASKWITGLSITTLKDNWSSDYQRTNNAGVPDPNGS. Residues N337, N353, and N370 are each glycosylated (N-linked (GlcNAc...) asparagine). Residues 373–393 form a helical membrane-spanning segment; sequence IYWDFNALLGLYFPAVTGIMA. At 394–412 the chain is on the cytoplasmic side; the sequence is GSNRSASLKDTQRSIPIGT. The helical transmembrane segment at 413–433 threads the bilayer; sequence LHATISTTMMYLLSVFLFGAL. Residues 434 to 448 are Extracellular-facing; it reads STREGLLTDRLLCAA. The chain crosses the membrane as a helical span at residues 449–469; sequence VAWPSPAVVYAGIILSTLGAA. Residues 470–505 are Cytoplasmic-facing; the sequence is LQSLTGAPRLLAAIANDDILPVLNYFKAYEGSEPHV. The helical transmembrane segment at 506–526 threads the bilayer; it reads ATLFTSFICISCVIIGNLDVI. Residues 527–529 are Extracellular-facing; sequence TPT. Residues 530-552 traverse the membrane as a helical segment; sequence ITMFFLLCYAGVNLSCFLLDLLD. The Cytoplasmic segment spans residues 553–558; the sequence is APSWRP. Residues 559–579 traverse the membrane as a helical segment; that stretch reads RWKLHHWSLSLIGALLCIVIM. The Extracellular segment spans residues 580–585; the sequence is FMISWT. A helical membrane pass occupies residues 586-606; the sequence is FTVVSLALASLIYYYVSLKGK. The Cytoplasmic portion of the chain corresponds to 607–994; it reads AGDWGDGFKS…YRRDVVTLFT (388 aa).

It belongs to the SLC12A transporter family.

It localises to the membrane. Probable cation/chloride cotransporter. This chain is Cation-chloride cotransporter 2 (CCC2), found in Oryza sativa subsp. japonica (Rice).